The primary structure comprises 25 residues: Chrysophsin-2 (25 aa).

Histidine 25 bears the Histidine amide mark.

In terms of tissue distribution, gill.

Its subcellular location is the secreted. Functionally, has antibacterial activity against Gram-positive bacteria B.subtilis ATCC 6633, L.garvieae ATCC 49156 and S.iniae F-8502, and Gram-negative bacteria E.coli WT-2, V.anguillarum ATCC 19264, V.penaeicida KHA, V.harveyi ATCC 14126, V.vulnificus ATCC 33148 and A.salmonicida NCMB 1102. Has hemolytic activity against human red blood cells. Seems to disrupt the membranes by adopting an alpha helical conformation. May play a significant role in innate host defense. The chain is Chrysophsin-2 from Pagrus major (Red sea bream).